Here is a 406-residue protein sequence, read N- to C-terminus: Solute carrier family 22 member 18 (406 aa).

Helical transmembrane passes span 8 to 28 (GIIILTYVLAALELTCLFMQF), 43 to 63 (VSFGYLQTTFGVLQLLGGPVF), 85 to 105 (ALYLLLVASCSPALPGVFLLF), 140 to 160 (LGLCFGIGIIFGSLLGGTLNT), 168 to 188 (AILAFVVTLLGAVLSFTCVPA), 226 to 246 (FLVKVISGLPSGLFLVMFSII), 258 to 278 (AGYLMSFFGILQMMIQGLVIG), 295 to 315 (LVFAVVGLGMALMSSVLHFCF), 316 to 336 (LMPGLVFSLCTLNVVTDSMLT), and 374 to 394 (GVPIFGHVQLMVNLLVLLVLW).

It belongs to the major facilitator (TC 2.A.1) superfamily. Organic cation transporter (TC 2.A.1.19) family. In terms of assembly, interacts with RNF167. Expressed at high levels in fetal and adult kidney and liver, and extraembryonic membranes (yolk sac). Expressed at moderate levels in intestine, heart, lung and testis.

It is found in the apical cell membrane. Its function is as follows. May act as a transporter of organic cations based on a proton efflux antiport mechanism. May play a role in the transport of chloroquine and quinidine-related compounds in kidney. Plays a role in the regulation of lipid metabolism. The protein is Solute carrier family 22 member 18 (Slc67a1) of Mus musculus (Mouse).